A 611-amino-acid polypeptide reads, in one-letter code: MNIMDSSPLLASVMKQNAHCGELKYDFSCELYRMSTFSTFPVNVPVSERRLARAGFYYTGVQDKVKCFSCGLVLDNWQPGDNAMEKHKQVYPSCSFVQNMLSLNNLGLSTHSAFSPLVASNLSPSLRSMTLSPSFEQVGYFSGSFSSFPRDPVTTRAAEDLSHLRSKLQNPSMSTEEARLRTSHAWPLMCLWPAEVAKAGLDDLGTADKVACVNCGVKLSNWEPKDNAMSEHRRHFPNCPFVENLMRDQPSFNVSNVTMQTHEARVKTFINWPTRIPVQPEQLADAGFYYVGRNDDVKCFCCDGGLRCWESGDDPWIEHAKWFPRCEYLLRVKGGEFVSQVQARFPHLLWNSSCTTSDKPVDENMDPIIHFEPGESPSEDAIMMNTPVVKAALEMGFSRRLIKQTVQSKILATEENYKTVNDLVSELLTAEDEKREEEKERQFEEVASDDLSLIRKNRMALFQRLTSVLPILGSLLSAKVITELEHDVIKQTTQTPSQARELIDTVLVKGNAAASIFRNCLKDFDPVLYKDLFVEKSMKYVPTEDVSGLPMEEQLRRLQEERTCKVCMDKEVSIVFIPCGHLVVCKECAPSLRKCPICRGTIKGTVRTFLS.

3 BIR repeats span residues 30–97, 176–242, and 262–329; these read ELYR…CSFV, EEAR…CPFV, and HEAR…CEYL. The Zn(2+) site is built by C299, C302, H319, and C326. Positions 446–536 constitute a CARD domain; it reads VASDDLSLIR…VLYKDLFVEK (91 aa). An RING-type zinc finger spans residues 564–599; sequence CKVCMDKEVSIVFIPCGHLVVCKECAPSLRKCPICR.

It belongs to the IAP family. Cells of the T-lymphocyte lineage. Found in both cortical and medullary cells of the thymus. Expressed at relatively high levels also in spleen, bursa, intestine and lung and at very low levels in testis, brain and skeletal muscle.

The protein localises to the nucleus. Its subcellular location is the cytoplasm. Apoptotic suppressor. This chain is Inhibitor of apoptosis protein (ITA), found in Gallus gallus (Chicken).